A 189-amino-acid polypeptide reads, in one-letter code: ATP synthase subunit delta (189 aa).

The protein belongs to the ATPase delta chain family. In terms of assembly, F-type ATPases have 2 components, F(1) - the catalytic core - and F(0) - the membrane proton channel. F(1) has five subunits: alpha(3), beta(3), gamma(1), delta(1), epsilon(1). F(0) has three main subunits: a(1), b(2) and c(10-14). The alpha and beta chains form an alternating ring which encloses part of the gamma chain. F(1) is attached to F(0) by a central stalk formed by the gamma and epsilon chains, while a peripheral stalk is formed by the delta and b chains.

It localises to the cell inner membrane. Its function is as follows. F(1)F(0) ATP synthase produces ATP from ADP in the presence of a proton or sodium gradient. F-type ATPases consist of two structural domains, F(1) containing the extramembraneous catalytic core and F(0) containing the membrane proton channel, linked together by a central stalk and a peripheral stalk. During catalysis, ATP synthesis in the catalytic domain of F(1) is coupled via a rotary mechanism of the central stalk subunits to proton translocation. In terms of biological role, this protein is part of the stalk that links CF(0) to CF(1). It either transmits conformational changes from CF(0) to CF(1) or is implicated in proton conduction. The sequence is that of ATP synthase subunit delta from Ehrlichia ruminantium (strain Gardel).